The sequence spans 319 residues: MSESPETPEPSPAQSPEAAPEQPQAARPVTPGSQASFGTYGGRPVSFVRRGTRLQGRRQQAWEEHSDRWAVDVPRHIANTSVHPDYVFDAEAEFGRSAPLIVEIGSGLGDAVCHAAEENPDWDFLAVEVYTPGLANTVIKINSRKLSNVRVVEANAPEVLATMLPAGSVSEVWVFFPDPWHKSRHHKRRLIQPEFAALVAAALKPGGLFRVATDWSNYAVHVRDVMAGSADFVNLHDGERRGPESPLTQVWQSGVESLVGGAPVKEGRAPVSTEHTGPNEGVDETGGWAPRFEGRIRTSFENKAHEAGRLIFDLCYRRL.

A disordered region spans residues 1–44; the sequence is MSESPETPEPSPAQSPEAAPEQPQAARPVTPGSQASFGTYGGRP. Residues 14 to 26 are compositionally biased toward low complexity; sequence QSPEAAPEQPQAA. Residues Glu103, Glu128, Asn155, and Asp178 each coordinate S-adenosyl-L-methionine. Asp178 is an active-site residue. Residues Lys182 and Asp214 each contribute to the substrate site. The interval 262–288 is disordered; that stretch reads APVKEGRAPVSTEHTGPNEGVDETGGW. 298–301 contributes to the substrate binding site; that stretch reads TSFE.

The protein belongs to the class I-like SAM-binding methyltransferase superfamily. TrmB family.

The catalysed reaction is guanosine(46) in tRNA + S-adenosyl-L-methionine = N(7)-methylguanosine(46) in tRNA + S-adenosyl-L-homocysteine. Its pathway is tRNA modification; N(7)-methylguanine-tRNA biosynthesis. Its function is as follows. Catalyzes the formation of N(7)-methylguanine at position 46 (m7G46) in tRNA. This Arthrobacter sp. (strain FB24) protein is tRNA (guanine-N(7)-)-methyltransferase.